The primary structure comprises 497 residues: Guanosine-5'-triphosphate,3'-diphosphate pyrophosphatase (497 aa).

Belongs to the GppA/Ppx family. GppA subfamily.

It carries out the reaction guanosine 3'-diphosphate 5'-triphosphate + H2O = guanosine 3',5'-bis(diphosphate) + phosphate + H(+). Its pathway is purine metabolism; ppGpp biosynthesis; ppGpp from GTP: step 2/2. In terms of biological role, catalyzes the conversion of pppGpp to ppGpp. Guanosine pentaphosphate (pppGpp) is a cytoplasmic signaling molecule which together with ppGpp controls the 'stringent response', an adaptive process that allows bacteria to respond to amino acid starvation, resulting in the coordinated regulation of numerous cellular activities. This chain is Guanosine-5'-triphosphate,3'-diphosphate pyrophosphatase, found in Vibrio campbellii (strain ATCC BAA-1116).